The sequence spans 254 residues: Nickel import ATP-binding protein NikD (254 aa).

The ABC transporter domain occupies 2–241; that stretch reads PQQIELRNIA…PKHTVTRSLV (240 aa). ATP is bound at residue 36–43; sequence GGSGSGKS.

Belongs to the ABC transporter superfamily. Nickel importer (TC 3.A.1.5.3) family. In terms of assembly, the complex is composed of two ATP-binding proteins (NikD and NikE), two transmembrane proteins (NikB and NikC) and a solute-binding protein (NikA).

It localises to the cell inner membrane. It carries out the reaction Ni(2+)(out) + ATP + H2O = Ni(2+)(in) + ADP + phosphate + H(+). Its function is as follows. Part of the ABC transporter complex NikABCDE involved in nickel import. Responsible for energy coupling to the transport system. The protein is Nickel import ATP-binding protein NikD of Escherichia coli (strain K12).